The sequence spans 395 residues: Putative ankyrin repeat protein RF_0950 (395 aa).

ANK repeat units follow at residues 3-32, 36-65, 69-98, 101-130, 134-166, 172-201, and 205-234; these read YQKELLIEAIQEDNLKEVQKLLQAGVNPNT, YGKLCIRSAINNENLDIVKVLLDYGADPNA, IKDPIILEAIRSRELGIINSLLKKGANPNV, RHENPIILSALPRGVNIVNTLLNNGADPNQ, NGNTALSIILERTGDINVDVTALLIEKVKEKAL, NGETCLHLAAQQGKIQMFDKYLDYYQTVNI, and AGNTPLYWSKLLGHTEISDMLNKRAEELNE. Residues 272 to 395 form the Glutamine amidotransferase type-1 domain; that stretch reads KTKLIYQGGD…YLKVPILKEK (124 aa). The active-site Nucleophile is the cysteine 377.

This Rickettsia felis (strain ATCC VR-1525 / URRWXCal2) (Rickettsia azadi) protein is Putative ankyrin repeat protein RF_0950.